We begin with the raw amino-acid sequence, 626 residues long: Chaperone protein HtpG (626 aa).

The segment at 1-339 (MSTNQETRGF…SNDLPLNVSR (339 aa)) is a; substrate-binding. A b region spans residues 340–555 (EILQDNKVTA…NDQMTTQMAK (216 aa)). Positions 556–626 (LFAAAGQPVP…FIKRVNNLLG (71 aa)) are c.

This sequence belongs to the heat shock protein 90 family. Homodimer.

It is found in the cytoplasm. Its function is as follows. Molecular chaperone. Has ATPase activity. The sequence is that of Chaperone protein HtpG from Histophilus somni (strain 2336) (Haemophilus somnus).